Consider the following 195-residue polypeptide: Thymidine kinase (195 aa).

Residues 15–22 (GSMFSGKS) and 88–91 (DEVQ) each bind ATP. Glutamate 89 (proton acceptor) is an active-site residue. Zn(2+) contacts are provided by cysteine 145, cysteine 148, cysteine 183, and cysteine 186.

The protein belongs to the thymidine kinase family. In terms of assembly, homotetramer.

It is found in the cytoplasm. It carries out the reaction thymidine + ATP = dTMP + ADP + H(+). This is Thymidine kinase from Bacillus cereus (strain 03BB102).